Consider the following 274-residue polypeptide: Malonyl-[acyl-carrier protein] O-methyltransferase (274 aa).

This sequence belongs to the methyltransferase superfamily.

The catalysed reaction is malonyl-[ACP] + S-adenosyl-L-methionine = malonyl-[ACP] methyl ester + S-adenosyl-L-homocysteine. It participates in cofactor biosynthesis; biotin biosynthesis. Converts the free carboxyl group of a malonyl-thioester to its methyl ester by transfer of a methyl group from S-adenosyl-L-methionine (SAM). It allows to synthesize pimeloyl-ACP via the fatty acid synthetic pathway. In Bacteroides helcogenes (strain ATCC 35417 / DSM 20613 / JCM 6297 / CCUG 15421 / P 36-108), this protein is Malonyl-[acyl-carrier protein] O-methyltransferase.